The following is a 444-amino-acid chain: Glutamate--tRNA ligase 2 (444 aa).

Positions 7-17 (PSPTGYLHVGN) match the 'HIGH' region motif. Positions 240–244 (KLSKR) match the 'KMSKS' region motif. An ATP-binding site is contributed by K243.

This sequence belongs to the class-I aminoacyl-tRNA synthetase family. Glutamate--tRNA ligase type 1 subfamily. In terms of assembly, monomer.

It is found in the cytoplasm. It carries out the reaction tRNA(Glu) + L-glutamate + ATP = L-glutamyl-tRNA(Glu) + AMP + diphosphate. In terms of biological role, catalyzes the attachment of glutamate to tRNA(Glu) in a two-step reaction: glutamate is first activated by ATP to form Glu-AMP and then transferred to the acceptor end of tRNA(Glu). This is Glutamate--tRNA ligase 2 from Gluconobacter oxydans (strain 621H) (Gluconobacter suboxydans).